We begin with the raw amino-acid sequence, 146 residues long: Hemoglobin subunit beta (146 aa).

The residue at position 1 (V1) is an N-acetylvaline. A Globin domain is found at 2–146 (HLTGEEKAAV…VANALAHKYH (145 aa)). The residue at position 12 (T12) is a Phosphothreonine. Residue S44 is modified to Phosphoserine. K59 carries the N6-acetyllysine modification. H63 contributes to the heme b binding site. K82 carries the post-translational modification N6-acetyllysine. H92 is a heme b binding site. The residue at position 93 (C93) is an S-nitrosocysteine. At K144 the chain carries N6-acetyllysine.

The protein belongs to the globin family. In terms of assembly, heterotetramer of two alpha chains and two beta chains. As to expression, red blood cells.

Its function is as follows. Involved in oxygen transport from the lung to the various peripheral tissues. This chain is Hemoglobin subunit beta (HBB), found in Aotus trivirgatus (Three-striped night monkey).